We begin with the raw amino-acid sequence, 287 residues long: 4-hydroxybenzoate octaprenyltransferase (287 aa).

Helical transmembrane passes span 23–43 (IGSL…GGTA), 46–66 (GKLL…GCVI), 99–119 (LFVL…AMTI), 141–161 (LPQV…YAAV), 162–182 (GESL…WTVA), 213–233 (LVIG…GDLN), 237–257 (GAYY…QQLI), and 266–286 (FRAF…ILLA).

It belongs to the UbiA prenyltransferase family. The cofactor is Mg(2+).

It localises to the cell inner membrane. The catalysed reaction is all-trans-octaprenyl diphosphate + 4-hydroxybenzoate = 4-hydroxy-3-(all-trans-octaprenyl)benzoate + diphosphate. The protein operates within cofactor biosynthesis; ubiquinone biosynthesis. In terms of biological role, catalyzes the prenylation of para-hydroxybenzoate (PHB) with an all-trans polyprenyl group. Mediates the second step in the final reaction sequence of ubiquinone-8 (UQ-8) biosynthesis, which is the condensation of the polyisoprenoid side chain with PHB, generating the first membrane-bound Q intermediate 3-octaprenyl-4-hydroxybenzoate. The protein is 4-hydroxybenzoate octaprenyltransferase of Edwardsiella ictaluri (strain 93-146).